The primary structure comprises 218 residues: Thiopurine S-methyltransferase (218 aa).

S-adenosyl-L-methionine contacts are provided by Trp10, Leu45, Glu66, and Arg123.

The protein belongs to the class I-like SAM-binding methyltransferase superfamily. TPMT family.

The protein localises to the cytoplasm. The catalysed reaction is S-adenosyl-L-methionine + a thiopurine = S-adenosyl-L-homocysteine + a thiopurine S-methylether.. This chain is Thiopurine S-methyltransferase, found in Shewanella baltica (strain OS195).